The primary structure comprises 132 residues: Phosphoribosyl-AMP cyclohydrolase (132 aa).

D86 contributes to the Mg(2+) binding site. C87 is a Zn(2+) binding site. 2 residues coordinate Mg(2+): D88 and D90. Zn(2+) contacts are provided by C103 and C110.

The protein belongs to the PRA-CH family. As to quaternary structure, homodimer. The cofactor is Mg(2+). Zn(2+) serves as cofactor.

The protein localises to the cytoplasm. It catalyses the reaction 1-(5-phospho-beta-D-ribosyl)-5'-AMP + H2O = 1-(5-phospho-beta-D-ribosyl)-5-[(5-phospho-beta-D-ribosylamino)methylideneamino]imidazole-4-carboxamide. The protein operates within amino-acid biosynthesis; L-histidine biosynthesis; L-histidine from 5-phospho-alpha-D-ribose 1-diphosphate: step 3/9. In terms of biological role, catalyzes the hydrolysis of the adenine ring of phosphoribosyl-AMP. The chain is Phosphoribosyl-AMP cyclohydrolase from Clavibacter michiganensis subsp. michiganensis (strain NCPPB 382).